The following is a 114-amino-acid chain: Cholecystokinin (114 aa).

Positions 1 to 20 (MNGGLCLCVLMAVLAAGTLA) are cleaved as a signal peptide. A Sulfotyrosine modification is found at Y96. Position 102 is a phenylalanine amide (F102). Residues 106 to 114 (SAEEYEYTS) constitute a propeptide that is removed on maturation. 2 positions are modified to sulfotyrosine: Y110 and Y112.

The protein belongs to the gastrin/cholecystokinin family. In terms of assembly, binds to CCK-A receptors in the pancreas and CCK-B receptors in the brain. In terms of processing, the precursor is cleaved by proteases to produce a number of active cholecystokinins. Brain contains CCK-octapeptide (CCK8) and several CCK-desoctapeptides; whereas pig gut contains intact CCK33, CCK39, and CCK58 as well as CCK-octapeptide and the CCK-desoctapeptides. Distribution differences are due to tissue-specific post-translational processing events. The precursor is cleaved by ACE, which removes the Gly-Arg-Arg peptide at the C-terminus, leading to mature hormone. In terms of tissue distribution, synthesized in both cerebral cortex and duodenal mucosa.

Its subcellular location is the secreted. In terms of biological role, this peptide hormone induces gall bladder contraction and the release of pancreatic enzymes in the gut. Its function in the brain is not clear. Binding to CCK-A receptors stimulates amylase release from the pancreas, binding to CCK-B receptors stimulates gastric acid secretion. The polypeptide is Cholecystokinin (CCK) (Sus scrofa (Pig)).